A 70-amino-acid chain; its full sequence is U2-agatoxin-Ao1a (70 aa).

An N-terminal signal peptide occupies residues 1–20 (MRAIISLFLISAMVFSMIQA). The propeptide occupies 21–34 (VPEEEGLQLSEDER). 3 disulfide bridges follow: Cys-37–Cys-53, Cys-44–Cys-58, and Cys-52–Cys-68. Leu-69 is subject to Leucine amide.

Belongs to the neurotoxin 01 (U2-agtx) family. In terms of tissue distribution, expressed by the venom gland.

The protein localises to the secreted. Insect active toxin causing rapid but reversible paralysis in crickets. No activity shown in mammals. Suppresses the excitatory postsynaptic potentials evoked in lobster neuromuscular synaptic preparations, possibly by blocking the presynaptic calcium channel. Induces instantaneous reversible paralysis when injected into crickets. Does not show effect on mammalian Cav2.1/CACNA1A, Cav2.2/CACNA1B and Cav2.3/CACNA1E. This Agelena orientalis (Funnel-web spider) protein is U2-agatoxin-Ao1a.